A 233-amino-acid polypeptide reads, in one-letter code: MQQGQMAYDRAITVFSPDGRLFQVEYAREAVKKGSTALGMKFANGVLLISDKKVRSRLIEQNSIEKIQLIDDYVAAVTSGLVADARVLVDFARISAQQEKVTYGSLVNIENLVKRVADQMQQYTQYGGVRPYGVSLIFAGIDQIGPRLFDCDPAGTINEYKATAIGSGKDAVVSFLEREYKENLPEKEAVTLGIKALKSSLEEGEELKAPEIASITVGNKYRIYDQEEVKKFL.

Belongs to the peptidase T1A family. The 20S proteasome core is composed of 14 alpha and 14 beta subunits that assemble into four stacked heptameric rings, resulting in a barrel-shaped structure. The two inner rings, each composed of seven catalytic beta subunits, are sandwiched by two outer rings, each composed of seven alpha subunits. The catalytic chamber with the active sites is on the inside of the barrel. Has a gated structure, the ends of the cylinder being occluded by the N-termini of the alpha-subunits. Is capped at one or both ends by the proteasome regulatory ATPase, PAN. Post-translationally, the N-terminus is blocked.

The protein resides in the cytoplasm. The formation of the proteasomal ATPase PAN-20S proteasome complex, via the docking of the C-termini of PAN into the intersubunit pockets in the alpha-rings, triggers opening of the gate for substrate entry. Interconversion between the open-gate and close-gate conformations leads to a dynamic regulation of the 20S proteasome proteolysis activity. Its function is as follows. Component of the proteasome core, a large protease complex with broad specificity involved in protein degradation. The T.acidophilum proteasome is able to cleave oligopeptides after Tyr, Leu, Phe, and to a lesser extent after Glu and Arg. Thus, displays chymotrypsin-like activity and low level of caspase-like and trypsin-like activities. This Thermoplasma acidophilum (strain ATCC 25905 / DSM 1728 / JCM 9062 / NBRC 15155 / AMRC-C165) protein is Proteasome subunit alpha.